Consider the following 150-residue polypeptide: Linear element protein rec25 (150 aa).

A Phosphoserine modification is found at serine 11.

Component of linear elements (LinEs), which are similar to synaptonemal complexes, at least composed of rec27, rec25, rec10 and mug20. Interacts with rec10; the interaction is direct.

It localises to the cytoplasm. The protein localises to the nucleus. The protein resides in the chromosome. Functionally, during meiotic DNA recombination, binds to and may help activate DNA double-strand break (DSB) hotspot sites. This chain is Linear element protein rec25, found in Schizosaccharomyces pombe (strain 972 / ATCC 24843) (Fission yeast).